Here is a 356-residue protein sequence, read N- to C-terminus: Phospho-N-acetylmuramoyl-pentapeptide-transferase (356 aa).

Transmembrane regions (helical) follow at residues 3–23, 51–71, 80–100, 114–134, 152–172, 185–205, 227–247, 254–274, 279–299, and 333–353; these read QILF…PLLI, TMGG…AKVI, GLLV…DDYI, AKMA…LQFP, FGWS…ILAM, LATG…LWQF, PLDL…FLWW, IFMG…LAIL, FLLA…VIQV, and FWII…AGWA.

The protein belongs to the glycosyltransferase 4 family. MraY subfamily. Mg(2+) is required as a cofactor.

It is found in the cell membrane. It carries out the reaction UDP-N-acetyl-alpha-D-muramoyl-L-alanyl-gamma-D-glutamyl-meso-2,6-diaminopimeloyl-D-alanyl-D-alanine + di-trans,octa-cis-undecaprenyl phosphate = di-trans,octa-cis-undecaprenyl diphospho-N-acetyl-alpha-D-muramoyl-L-alanyl-D-glutamyl-meso-2,6-diaminopimeloyl-D-alanyl-D-alanine + UMP. The protein operates within cell wall biogenesis; peptidoglycan biosynthesis. Its function is as follows. Catalyzes the initial step of the lipid cycle reactions in the biosynthesis of the cell wall peptidoglycan: transfers peptidoglycan precursor phospho-MurNAc-pentapeptide from UDP-MurNAc-pentapeptide onto the lipid carrier undecaprenyl phosphate, yielding undecaprenyl-pyrophosphoryl-MurNAc-pentapeptide, known as lipid I. This chain is Phospho-N-acetylmuramoyl-pentapeptide-transferase, found in Streptomyces griseus subsp. griseus (strain JCM 4626 / CBS 651.72 / NBRC 13350 / KCC S-0626 / ISP 5235).